The chain runs to 501 residues: uncharacterized protein (501 aa).

A run of 7 helical transmembrane segments spans residues 14–34 (AIFI…SGSV), 73–93 (FILF…LGYM), 111–131 (IFGI…ICIF), 197–217 (FIIA…VLLI), 274–294 (ILLS…YYFG), 297–317 (FNLI…YNLI), and 466–486 (FLVL…RLIL).

The protein localises to the membrane. This is an uncharacterized protein from Dictyostelium discoideum (Social amoeba).